The chain runs to 554 residues: Hydroxylamine reductase (554 aa).

The [2Fe-2S] cluster site is built by cysteine 3, cysteine 6, cysteine 18, and cysteine 25. Histidine 252, glutamate 276, cysteine 320, cysteine 408, cysteine 436, cysteine 461, glutamate 495, and lysine 497 together coordinate hybrid [4Fe-2O-2S] cluster. Residue cysteine 408 is modified to Cysteine persulfide.

It belongs to the HCP family. The cofactor is [2Fe-2S] cluster. Requires hybrid [4Fe-2O-2S] cluster as cofactor.

The protein resides in the cytoplasm. It catalyses the reaction A + NH4(+) + H2O = hydroxylamine + AH2 + H(+). In terms of biological role, catalyzes the reduction of hydroxylamine to form NH(3) and H(2)O. This Shewanella sp. (strain MR-7) protein is Hydroxylamine reductase.